Here is a 276-residue protein sequence, read N- to C-terminus: NH(3)-dependent NAD(+) synthetase (276 aa).

ATP is bound at residue 43 to 50 (GISGGVDS). Residue D49 participates in Mg(2+) binding. R146 serves as a coordination point for deamido-NAD(+). T166 contacts ATP. Residue E171 participates in Mg(2+) binding. Deamido-NAD(+) is bound by residues K179 and D186. K195 and T217 together coordinate ATP. 266–267 (HK) contributes to the deamido-NAD(+) binding site.

It belongs to the NAD synthetase family. Homodimer.

It carries out the reaction deamido-NAD(+) + NH4(+) + ATP = AMP + diphosphate + NAD(+) + H(+). It participates in cofactor biosynthesis; NAD(+) biosynthesis; NAD(+) from deamido-NAD(+) (ammonia route): step 1/1. Functionally, catalyzes the ATP-dependent amidation of deamido-NAD to form NAD. Uses ammonia as a nitrogen source. This chain is NH(3)-dependent NAD(+) synthetase, found in Vibrio parahaemolyticus serotype O3:K6 (strain RIMD 2210633).